Consider the following 8886-residue polypeptide: Obscurin (8886 aa).

4 Ig-like domains span residues 9–99 (PRFL…LRVD), 109–201 (PHFL…LVVD), 234–320 (PPSP…QTYS), and 329–415 (PTVP…AELS). A disulfide bridge links Cys-30 with Cys-81. The interval 135-165 (SPQPAVSWSKDGRRLGPPDAPHVRVEEHGES) is disordered. The span at 144–164 (KDGRRLGPPDAPHVRVEEHGE) shows a compositional bias: basic and acidic residues. Disulfide bonds link Cys-257–Cys-309 and Cys-352–Cys-402. Ser-393 bears the Phosphoserine mark. The Fibronectin type-III 1 domain occupies 513–610 (PPADPVVKAK…FPGTMHLVPM (98 aa)). Ig-like domains are found at residues 702 to 793 (PSSK…QDIT), 859 to 951 (PKLV…VAEP), 951 to 1043 (PKLV…VAEP), 1043 to 1135 (PKMV…VTEP), 1135 to 1227 (PKLV…VAEP), 1227 to 1319 (PKLV…VTEP), 1319 to 1407 (PKLV…FRLD), 1411 to 1503 (PKLV…VAEP), 1503 to 1595 (PKLV…VAEP), 1595 to 1687 (PKLA…VAEP), 1687 to 1779 (PKLA…VAEP), 1779 to 1871 (PKLA…VAEP), 1871 to 1963 (PKLM…VAEP), 1963 to 2051 (PKLV…FRLD), 2055 to 2147 (TRLM…VAEA), 2152 to 2241 (PERP…EEVA), 2242 to 2325 (AKFS…ARLT), 2329 to 2415 (PRVV…AALR), 2420 to 2504 (PVLF…AKLN), 2598 to 2681 (PVSF…ASLR), 2721 to 2812 (PVTL…QSIT), 2900 to 2984 (PVVL…AEVT), 3078 to 3162 (PVVF…SKVS), 3258 to 3342 (PVDI…AKLC), 3348 to 3431 (NRFT…ARLL), 3527 to 3610 (PSIF…SSIV), 3616 to 3700 (PVRF…ATLT), 3785 to 3876 (ATLT…ATLT), 3881 to 3964 (PAKF…ATLT), 4042 to 4125 (PTKF…ATLS), 4130 to 4213 (PSRF…ATLS), 4219 to 4301 (PRFI…ATLN), 4307 to 4389 (PRFI…AVLT), 4395 to 4477 (PKFT…ATLS), 4483 to 4565 (PRFI…ATLS), 4571 to 4653 (PRFI…ATLS), 4659 to 4741 (PRFI…ATLS), 4746 to 4829 (PAKF…ATLS), 4833 to 4916 (PQVV…TSAT), 4923 to 5007 (PVRF…ARLS), 5013 to 5105 (PKFK…PEVT), 5378 to 5464 (LEVL…ARLS), and 5557 to 5659 (PQMV…TFNV). 14 disulfide bridges follow: Cys-885–Cys-935, Cys-977–Cys-1027, Cys-1069–Cys-1119, Cys-1161–Cys-1211, Cys-1253–Cys-1303, Cys-1345–Cys-1395, Cys-1437–Cys-1487, Cys-1529–Cys-1579, Cys-1621–Cys-1671, Cys-1713–Cys-1763, Cys-1805–Cys-1855, Cys-1897–Cys-1947, Cys-1989–Cys-2039, and Cys-2081–Cys-2131. A disulfide bond links Cys-2263 and Cys-2313. Cystine bridges form between Cys-2620–Cys-2669, Cys-2743–Cys-2793, Cys-2922–Cys-2972, Cys-3100–Cys-3150, Cys-3280–Cys-3330, Cys-3369–Cys-3419, Cys-3549–Cys-3599, and Cys-3638–Cys-3688. At Ser-3321 the chain carries Phosphoserine. Ser-3802 is subject to Phosphoserine. Intrachain disulfides connect Cys-3815/Cys-3864, Cys-3903/Cys-3952, Cys-4064/Cys-4113, Cys-4152/Cys-4201, Cys-4240/Cys-4289, Cys-4328/Cys-4377, Cys-4416/Cys-4465, Cys-4504/Cys-4553, Cys-4592/Cys-4641, Cys-4680/Cys-4729, Cys-4768/Cys-4817, Cys-4856/Cys-4906, Cys-4945/Cys-4995, and Cys-5034/Cys-5086. Residue Ser-4960 is modified to Phosphoserine. A Fibronectin type-III 2 domain is found at 5471–5569 (PPEDAEVVGR…VKIAPAPAPA (99 aa)). A disulfide bond links Cys-5590 and Cys-5643. Ser-5699 carries the post-translational modification Phosphoserine. The segment at 5700–5736 (REPTLDSISELPEEDSRVQHLRQEAEETAPDLSEGYS) is disordered. Thr-5703 bears the Phosphothreonine mark. Position 5706 is a phosphoserine (Ser-5706). The span at 5713-5724 (EDSRVQHLRQEA) shows a compositional bias: basic and acidic residues. Thr-5737 bears the Phosphothreonine mark. The residue at position 5754 (Ser-5754) is a Phosphoserine. Positions 5821 to 5850 (LDKAAVKIQAAFKGYKVRKEMKQQEGPVFS) constitute an IQ domain. The region spanning 5847 to 5930 (PVFSRTFGDT…QVSTKSGRVS (84 aa)) is the Ig-like 48 domain. Cysteines 5868 and 5920 form a disulfide. Positions 5977–5996 (EEELFLSADEGPGEPEEPAD) are disordered. Ig-like domains are found at residues 6077-6166 (PVFL…AELR), 6209-6298 (PQVL…ARLL), and 6320-6416 (PRIL…LHIS). Cys-6098 and Cys-6150 are disulfide-bonded. The interval 6504-6546 (KLQVPGGDSDEETKTPSASPRHGRSRPSSSVQESSSESEDGDS) is disordered. Position 6512 is a phosphoserine (Ser-6512). Position 6518 is a phosphothreonine (Thr-6518). Residues 6519–6538 (PSASPRHGRSRPSSSVQESS) are compositionally biased toward low complexity. Phosphoserine occurs at positions 6520 and 6522. Residues 6549 to 6616 (EIFDIYVVTA…SPAYLDKRLK (68 aa)) enclose the SH3 domain. Positions 6642-6826 (RLSSVIQELL…SALPQRAENK (185 aa)) constitute a DH domain. Residues 6844-6953 (EPIRQGHFIV…WVKEICGIQQ (110 aa)) form the PH domain. Arg-6924 is a binding site for a 1,2-diacyl-sn-glycero-3-phospho-(1D-myo-inositol-4,5-bisphosphate). Arg-6929 lines the a 1,2-diacyl-sn-glycero-3-phospho-(1D-myo-inositol-3,4-bisphosphate) pocket. 2 consecutive Ig-like domains span residues 6963-7046 (PEFE…GNAS) and 7057-7147 (PRFV…GELY). Intrachain disulfides connect Cys-6984-Cys-7036 and Cys-7078-Cys-7131. Residues 7200–7257 (ALGPSPGDLPNTRQSEPPAFEEAASQIPGAASGTPEVSQPGTHKGLEQETTSSGSQGW) form a disordered region. A compositionally biased stretch (polar residues) spans 7247–7257 (QETTSSGSQGW). The Ig-like 54 domain occupies 7306–7394 (PSMQVTIEDV…GQVLCKAELL (89 aa)). Residues 7416–7669 (YDVQEEIGRG…TSQCLAHPWF (254 aa)) form the Protein kinase 1 domain. Residues 7422–7430 (IGRGVFGFV) and Lys-7445 contribute to the ATP site. The active-site Proton acceptor is Asp-7535. Disordered stretches follow at residues 7717 to 7810 (GPPD…SPGC), 7879 to 8106 (EQAS…TTRK), and 8150 to 8180 (SSEE…VPLR). Phosphoserine is present on Ser-7779. Positions 7793–7804 (AAVPASPQSAGP) are enriched in low complexity. Over residues 7941–7952 (TTAKDRGHKEGF) the composition is skewed to basic and acidic residues. Polar residues predominate over residues 7986 to 7996 (SCHSELGSGSQ). Composition is skewed to low complexity over residues 8000–8014 (GPPS…PPQS) and 8053–8073 (GSLS…ASQV). Ser-8161 carries the post-translational modification Phosphoserine. The region spanning 8380-8464 (KGRDQELSDE…VSNPLGTAVT (85 aa)) is the Ig-like 55 domain. Residues Cys-8401 and Cys-8453 are joined by a disulfide bond. The Fibronectin type-III 3 domain maps to 8474–8566 (PSSSPRPEVG…PSEQVLLGGP (93 aa)). The region spanning 8590–8842 (FAFQMQIRRG…ASTCLQCGWL (253 aa)) is the Protein kinase 2 domain. Residues 8596 to 8604 (IRRGRFSVV) and Lys-8619 contribute to the ATP site. The Proton acceptor role is filled by Asp-8709.

It belongs to the protein kinase superfamily. CAMK Ser/Thr protein kinase family. In terms of assembly, interacts (via protein kinase domain 1) with CDH2 and (via protein kinase domain 1) with ATP1B1. Isoform 2 is found in a complex with DSG2, DESM, GJA1, CDH2 and VCL. Isoform 3 is found in a complex with DSG2, DESM, GJA1, CDH2, ANK3 and VCL. Mg(2+) serves as cofactor. In terms of processing, autophosphorylated by protein kinase domain 1 and 2. Post-translationally, two small isoforms, one probably containing protein kinase domain 2 and a partial protein kinase domain 1 and one containing only protein kinase domain 2, are glycosylated. As to expression, expressed in skeletal muscles including flexor digitorum brevis (FDB), soleus and tibialis anterior muscles, and to a lesser extent in heart muscles (at protein level). Isoform 2 and isoform 3 are expressed in the myocardium (at protein level).

Its subcellular location is the cytoplasm. It localises to the myofibril. It is found in the sarcomere. The protein localises to the m line. The protein resides in the z line. Its subcellular location is the cell membrane. It localises to the sarcolemma. It is found in the nucleus. The protein localises to the secreted. The enzyme catalyses L-seryl-[protein] + ATP = O-phospho-L-seryl-[protein] + ADP + H(+). It catalyses the reaction L-threonyl-[protein] + ATP = O-phospho-L-threonyl-[protein] + ADP + H(+). Its function is as follows. Structural component of striated muscles which plays a role in myofibrillogenesis. Probably involved in the assembly of myosin into sarcomeric A bands in striated muscle. Has serine/threonine protein kinase activity and phosphorylates N-cadherin CDH2 and sodium/potassium-transporting ATPase subunit ATP1B1. Binds (via the PH domain) strongly to phosphatidylinositol 3,4-bisphosphate (PtdIns(3,4)P2) and phosphatidylinositol 4,5-bisphosphate (PtdIns(4,5)P2), and to a lesser extent to phosphatidylinositol 3-phosphate (PtdIns(3)P), phosphatidylinositol 4-phosphate (PtdIns(4)P), phosphatidylinositol 5-phosphate (PtdIns(5)P) and phosphatidylinositol 3,4,5-trisphosphate (PtdIns(3,4,5)P3). Functionally, isoform 2 and isoform 3: bind phosphatidylinositol bisphosphates (PIP2s) via their PH domains and negatively regulate the PI3K/AKT/mTOR signaling pathway, thus contributing to the regulation of cardiomyocyte size and adhesion. The protein is Obscurin of Mus musculus (Mouse).